Consider the following 71-residue polypeptide: UPF0434 protein Meso_3270 (71 aa).

It belongs to the UPF0434 family.

This is UPF0434 protein Meso_3270 from Chelativorans sp. (strain BNC1).